The sequence spans 128 residues: CD59 glycoprotein (128 aa).

A signal peptide spans 1 to 25; the sequence is MGIQGGSVLFGLLLVLAVFCHSGNS. The UPAR/Ly6 domain maps to 26–108; sequence LQCYSCPYPT…ALKNGGTTLS (83 aa). 5 disulfides stabilise this stretch: cysteine 28/cysteine 51, cysteine 31/cysteine 38, cysteine 44/cysteine 64, cysteine 70/cysteine 88, and cysteine 89/cysteine 94. Asparagine 43 carries an N-linked (GlcNAc...) asparagine glycan. The GPI-anchor amidated asparagine moiety is linked to residue asparagine 102. The propeptide at 103 to 128 is removed in mature form; the sequence is GGTTLSKKTVLLLVIPFLVAAWSLHP.

As to quaternary structure, interacts with T-cell surface antigen CD2. Post-translationally, N- and O-glycosylated.

The protein localises to the cell membrane. It is found in the secreted. In terms of biological role, potent inhibitor of the complement membrane attack complex (MAC) action, which protects self-cells from damage during complement activation. Acts by binding to the beta-haipins of C8 (C8A and C8B) components of the assembling MAC, forming an intermolecular beta-sheet that prevents incorporation of the multiple copies of C9 required for complete formation of the osmolytic pore. This chain is CD59 glycoprotein, found in Aotus trivirgatus (Three-striped night monkey).